The sequence spans 447 residues: Drebrin-like protein A (447 aa).

An ADF-H domain is found at 2 to 133 (SVNLSKNGAA…EPESIMEKVA (132 aa)). Disordered regions lie at residues 141–160 (NFHK…VGSV) and 184–368 (KDEE…TENQ). Positions 180–245 (AKAEKDEEER…EQEETEKQQT (66 aa)) form a coiled coil. The segment covering 184–242 (KDEEERRMEENRRANSEKDRLERERKEREQREAETREQRFRERAKEIDAQRKEQEETEK) has biased composition (basic and acidic residues). Positions 246-255 (VPASQRSVNP) are enriched in polar residues. The segment covering 319 to 328 (PESPVPPVSH) has biased composition (pro residues). A compositionally biased stretch (acidic residues) spans 345–365 (QEEENIYQDATEDQNIYEDTT). The SH3 domain maps to 388–447 (EKGVCARALYDYQAADDTEISFDPDDLITQIQFIDEGWWRGFSPAGHFGMFPANYVELLE).

Belongs to the ABP1 family.

The protein localises to the cytoplasm. Its subcellular location is the cytoskeleton. It is found in the cell projection. It localises to the lamellipodium. The protein resides in the ruffle. The protein localises to the cell cortex. Its subcellular location is the cytosol. It is found in the synapse. It localises to the perikaryon. The protein resides in the neuron projection. The protein localises to the cell membrane. Its subcellular location is the cytoplasmic vesicle. It is found in the clathrin-coated vesicle membrane. It localises to the golgi apparatus membrane. The protein resides in the podosome. The protein localises to the early endosome. Its subcellular location is the dendrite. It is found in the postsynaptic density. In terms of biological role, adapter protein that binds F-actin and dynamin, and thereby plays a role in receptor-mediated endocytosis. Plays a role in the reorganization of the actin cytoskeleton, formation of cell projections, such as neurites, in neuron morphogenesis and synapse formation. Does not bind G-actin and promote actin polymerization by itself, but excerts its functions by interaction with other proteins. Required for the formation of organized podosome rosettes. This Xenopus laevis (African clawed frog) protein is Drebrin-like protein A (dbnl-a).